A 103-amino-acid polypeptide reads, in one-letter code: Small ribosomal subunit protein uS10 (103 aa).

The protein belongs to the universal ribosomal protein uS10 family. Part of the 30S ribosomal subunit.

Functionally, involved in the binding of tRNA to the ribosomes. This Xanthomonas axonopodis pv. citri (strain 306) protein is Small ribosomal subunit protein uS10.